Consider the following 311-residue polypeptide: Malate dehydrogenase (311 aa).

Residues 7–13 and aspartate 34 contribute to the NAD(+) site; that span reads GAAGGIG. Residues arginine 81 and arginine 87 each coordinate substrate. NAD(+) is bound by residues asparagine 94 and 117 to 119; that span reads ITN. 2 residues coordinate substrate: asparagine 119 and arginine 153. The Proton acceptor role is filled by histidine 177. Methionine 227 lines the NAD(+) pocket.

This sequence belongs to the LDH/MDH superfamily. MDH type 1 family. As to quaternary structure, homodimer.

The enzyme catalyses (S)-malate + NAD(+) = oxaloacetate + NADH + H(+). In terms of biological role, catalyzes the reversible oxidation of malate to oxaloacetate. In Haemophilus influenzae (strain PittGG), this protein is Malate dehydrogenase.